Here is a 209-residue protein sequence, read N- to C-terminus: Orotate phosphoribosyltransferase (209 aa).

5-phospho-alpha-D-ribose 1-diphosphate is bound by residues arginine 98, lysine 102, histidine 104, and 124–132 (EDLISTGKS). Serine 128 contacts orotate.

The protein belongs to the purine/pyrimidine phosphoribosyltransferase family. PyrE subfamily. In terms of assembly, homodimer. The cofactor is Mg(2+).

It carries out the reaction orotidine 5'-phosphate + diphosphate = orotate + 5-phospho-alpha-D-ribose 1-diphosphate. Its pathway is pyrimidine metabolism; UMP biosynthesis via de novo pathway; UMP from orotate: step 1/2. Catalyzes the transfer of a ribosyl phosphate group from 5-phosphoribose 1-diphosphate to orotate, leading to the formation of orotidine monophosphate (OMP). The chain is Orotate phosphoribosyltransferase from Malacoplasma penetrans (strain HF-2) (Mycoplasma penetrans).